We begin with the raw amino-acid sequence, 1486 residues long: Alsin homolog (1486 aa).

3 RCC1 repeats span residues 147–201 (QGVV…MLVA), 256–307 (HTQL…ARTL), and 308–363 (DGRL…LLNA). MORN repeat units follow at residues 744-765 (CGTWRKGVLHGNCYLEYPDGSV), 766-784 (YCGELQHGIIEGFGKMVIP), 789-804 (YVGNFKGGRFHGHGVY), 817-832 (YEGNFCEGLFHGHGVM), 839-853 (YVGEYQANARSGYGV), and 863-884 (YMGMFADNKRSGIGSCITNRGD). The VPS9 domain occupies 1333–1486 (SRKDEMYRQN…VTSRALQKIP (154 aa)).

In terms of tissue distribution, in the embryo, expressed in a wide range of tissues including the epidermis and the ventral nerve cord.

In terms of biological role, has guanine nucleotide exchange factor (GEF) activity towards Rab5. Promotes the exchange of GDP to GTP, converting inactive GDP-bound Rab5 into its active GTP-bound form. In Drosophila melanogaster (Fruit fly), this protein is Alsin homolog.